The sequence spans 506 residues: UDP-N-acetylmuramoyl-L-alanyl-D-glutamate--2,6-diaminopimelate ligase (506 aa).

Residue Ser38 participates in UDP-N-acetyl-alpha-D-muramoyl-L-alanyl-D-glutamate binding. Residue 124–130 (GTNGKTS) coordinates ATP. Residues 166–167 (TT), Ser193, and Arg201 contribute to the UDP-N-acetyl-alpha-D-muramoyl-L-alanyl-D-glutamate site. Position 233 is an N6-carboxylysine (Lys233). Residues Arg401, 425-428 (DNPR), Gly477, and Glu481 contribute to the meso-2,6-diaminopimelate site. Positions 425–428 (DNPR) match the Meso-diaminopimelate recognition motif motif.

The protein belongs to the MurCDEF family. MurE subfamily. The cofactor is Mg(2+). In terms of processing, carboxylation is probably crucial for Mg(2+) binding and, consequently, for the gamma-phosphate positioning of ATP.

It is found in the cytoplasm. The catalysed reaction is UDP-N-acetyl-alpha-D-muramoyl-L-alanyl-D-glutamate + meso-2,6-diaminopimelate + ATP = UDP-N-acetyl-alpha-D-muramoyl-L-alanyl-gamma-D-glutamyl-meso-2,6-diaminopimelate + ADP + phosphate + H(+). Its pathway is cell wall biogenesis; peptidoglycan biosynthesis. In terms of biological role, catalyzes the addition of meso-diaminopimelic acid to the nucleotide precursor UDP-N-acetylmuramoyl-L-alanyl-D-glutamate (UMAG) in the biosynthesis of bacterial cell-wall peptidoglycan. In Leptospira interrogans serogroup Icterohaemorrhagiae serovar copenhageni (strain Fiocruz L1-130), this protein is UDP-N-acetylmuramoyl-L-alanyl-D-glutamate--2,6-diaminopimelate ligase.